Here is a 233-residue protein sequence, read N- to C-terminus: uncharacterized protein (233 aa).

Residues 21-43 are disordered; it reads RWRTATSADHPRRGRPAAQAVRR.

This is an uncharacterized protein from Mycobacterium tuberculosis (strain CDC 1551 / Oshkosh).